We begin with the raw amino-acid sequence, 316 residues long: Actinorhodin polyketide synthase bifunctional cyclase/dehydratase (316 aa).

It participates in antibiotic biosynthesis; actinorhodin biosynthesis. Functionally, is needed for correct cyclization of the oligoketide leading to isochromanequinone formation. This is Actinorhodin polyketide synthase bifunctional cyclase/dehydratase from Streptomyces coelicolor (strain ATCC BAA-471 / A3(2) / M145).